The following is a 146-amino-acid chain: Hemoglobin subunit beta (146 aa).

N-acetylvaline is present on valine 1. A Globin domain is found at 2-146 (HLTGEEKSLV…VANALAHKYH (145 aa)). Threonine 12 carries the phosphothreonine modification. A Phosphoserine modification is found at serine 44. Lysine 59 carries the N6-acetyllysine modification. Heme b is bound at residue histidine 63. Lysine 82 is subject to N6-acetyllysine. A heme b-binding site is contributed by histidine 92. Position 93 is an S-nitrosocysteine (cysteine 93). Residue lysine 144 is modified to N6-acetyllysine.

It belongs to the globin family. In terms of assembly, heterotetramer of two alpha chains and two beta chains. In terms of tissue distribution, red blood cells.

Its function is as follows. Involved in oxygen transport from the lung to the various peripheral tissues. This Ursus maritimus (Polar bear) protein is Hemoglobin subunit beta (HBB).